The primary structure comprises 91 residues: Sec-independent protein translocase protein TatAt (91 aa).

Residues 9–29 (FPGLPGGPELLVVLLIVVLLF) traverse the membrane as a helical segment. The disordered stretch occupies residues 48 to 91 (FQRGREEIEDELQDMTGDDDEDDATSESSADSVSTDSVSTESSN). The span at 54 to 72 (EIEDELQDMTGDDDEDDAT) shows a compositional bias: acidic residues. Over residues 73–91 (SESSADSVSTDSVSTESSN) the composition is skewed to low complexity.

Belongs to the TatA/E family. As to quaternary structure, forms a complex with TatC. Cytoplasmic and membrane-bound TatA form high-molecular-weight complexes.

Its subcellular location is the cell membrane. It is found in the cytoplasm. In terms of biological role, part of the twin-arginine translocation (Tat) system that transports large folded proteins containing a characteristic twin-arginine motif in their signal peptide across membranes. TatA could form the protein-conducting channel of the Tat system. The sequence is that of Sec-independent protein translocase protein TatAt from Haloferax volcanii (strain ATCC 29605 / DSM 3757 / JCM 8879 / NBRC 14742 / NCIMB 2012 / VKM B-1768 / DS2) (Halobacterium volcanii).